The primary structure comprises 261 residues: Transcription factor BEE 3 (261 aa).

A compositionally biased stretch (low complexity) spans 72–82; it reads NIQNNEESSSQ. 2 disordered regions span residues 72 to 158 and 242 to 261; these read NIQN…TDSH and VEMG…SWTL. Positions 95–123 are enriched in polar residues; it reads VSTSENSVSDQTLSTSSAQVSINGNISTK. Basic and acidic residues predominate over residues 135-146; the sequence is NREEEKEREVVH. Residues 153–203 form the bHLH domain; sequence QATDSHSIAERVRRGKINERLKCLQDIVPGCYKTMGMATMLDEIINYVQSL.

As to quaternary structure, homodimer. Expressed in stems.

The protein resides in the nucleus. Positive regulator of brassinosteroid signaling. The sequence is that of Transcription factor BEE 3 (BEE3) from Arabidopsis thaliana (Mouse-ear cress).